Reading from the N-terminus, the 371-residue chain is GDP-perosamine synthase (371 aa).

The residue at position 186 (Lys186) is an N6-(pyridoxal phosphate)lysine.

Belongs to the DegT/DnrJ/EryC1 family. As to quaternary structure, homodimer. Requires pyridoxal 5'-phosphate as cofactor.

The enzyme catalyses GDP-alpha-D-perosamine + 2-oxoglutarate = GDP-4-dehydro-alpha-D-rhamnose + L-glutamate. Its pathway is bacterial outer membrane biogenesis; LPS O-antigen biosynthesis. In terms of biological role, catalyzes the synthesis of GDP-perosamine from GDP-4-keto-6-deoxy-D-mannose and L-glutamate. Can use only L-glutamate as amino donor. In vitro, can also use GDP-4-keto-3,6-dideoxymannose to produce GDP-3-deoxyperosamine. Involved in the formation of S-LPS, which is required for attachment of the protein S-layer to the outer membrane surface. This Caulobacter vibrioides (strain ATCC 19089 / CIP 103742 / CB 15) (Caulobacter crescentus) protein is GDP-perosamine synthase.